The chain runs to 167 residues: Chorion class CB protein PC404 (167 aa).

A left arm region spans residues 1-55 (IGREAIVGAGLQGPFGGPWPYDALSPFDMPYGPALPAMSCGAGSFGPSSGFAPAA). The central domain stretch occupies residues 56–126 (AYGGGLAVTS…GDGAVGIVAE (71 aa)). The right arm stretch occupies residues 127-167 (TPFASTSVNPAYGYGGAIGGGVPYNSYGPIGYGGCGYNALY).

The protein belongs to the chorion protein family.

This protein is one of many from the eggshell of the silk moth. This chain is Chorion class CB protein PC404, found in Antheraea polyphemus (Polyphemus moth).